Here is a 338-residue protein sequence, read N- to C-terminus: MKILVAMSGGVDSTVTAYKLKQAGHEIIGCYMKLHGKPNYHEENIQKVEKVANFLGIKYHILDLQEDFKNQVYMPFINTYKDGKTPNPCALCNRFIKLGKLLEFAKSLGCEKLATGHYARIENGLIKTAFDDSKDQSYFLANADKEALEYLIFPLGEMKKEDVKKFASTIEVLKSFATQKESSEICFVEDTYVQVLDQFMDTKIPGIVRDSSGKEVGKHEGYMHYTIGKRRGFEVRGAHEPHFVLKIDPKKNEIIVGKKEELKINEFDLEKINLFIDAKELDCEVKIRYRSRSTPCKVMINDDKSAKVILKEPVYGLASGQMAVFYDKDLVLASGFIN.

ATP-binding positions include 6-13 and methionine 32; that span reads AMSGGVDS. Residue cysteine 92 is the Nucleophile of the active site. Cysteine 92 and cysteine 186 form a disulfide bridge. Glycine 116 serves as a coordination point for ATP. The tract at residues 134–136 is interaction with tRNA; it reads KDQ. The active-site Cysteine persulfide intermediate is the cysteine 186. The tract at residues 288–289 is interaction with tRNA; that stretch reads RY.

The protein belongs to the MnmA/TRMU family.

Its subcellular location is the cytoplasm. The enzyme catalyses S-sulfanyl-L-cysteinyl-[protein] + uridine(34) in tRNA + AH2 + ATP = 2-thiouridine(34) in tRNA + L-cysteinyl-[protein] + A + AMP + diphosphate + H(+). In terms of biological role, catalyzes the 2-thiolation of uridine at the wobble position (U34) of tRNA, leading to the formation of s(2)U34. This chain is tRNA-specific 2-thiouridylase MnmA, found in Campylobacter lari (strain RM2100 / D67 / ATCC BAA-1060).